The chain runs to 123 residues: PTS system glucitol/sorbitol-specific EIIA component (123 aa).

The 116-residue stretch at 1-116 folds into the PTS EIIA type-5 domain; that stretch reads MTVIYQTTIT…PDDIAPGSVL (116 aa). H43 (tele-phosphohistidine intermediate) is an active-site residue. Position 43 is a phosphohistidine; by HPr (H43).

It is found in the cytoplasm. Its function is as follows. The phosphoenolpyruvate-dependent sugar phosphotransferase system (sugar PTS), a major carbohydrate active transport system, catalyzes the phosphorylation of incoming sugar substrates concomitantly with their translocation across the cell membrane. The enzyme II complex composed of SrlA, SrlB and SrlE is involved in glucitol/sorbitol transport. This is PTS system glucitol/sorbitol-specific EIIA component (srlB) from Shigella flexneri.